The chain runs to 204 residues: NADH-quinone oxidoreductase subunit C (204 aa).

It belongs to the complex I 30 kDa subunit family. In terms of assembly, NDH-1 is composed of 14 different subunits. Subunits NuoB, C, D, E, F, and G constitute the peripheral sector of the complex.

It localises to the cell inner membrane. The enzyme catalyses a quinone + NADH + 5 H(+)(in) = a quinol + NAD(+) + 4 H(+)(out). Its function is as follows. NDH-1 shuttles electrons from NADH, via FMN and iron-sulfur (Fe-S) centers, to quinones in the respiratory chain. The immediate electron acceptor for the enzyme in this species is believed to be ubiquinone. Couples the redox reaction to proton translocation (for every two electrons transferred, four hydrogen ions are translocated across the cytoplasmic membrane), and thus conserves the redox energy in a proton gradient. The chain is NADH-quinone oxidoreductase subunit C from Vesicomyosocius okutanii subsp. Calyptogena okutanii (strain HA).